The chain runs to 1067 residues: MPLNKDIKKVLVIGSGPIIIGQAAEFDYSGTQACQALKEEGIEVVLVNSNPATIMTDKEIADKVYLEPLTVEFVEKVIEKERPDSLLAGMGGQTGLNLAVELYEKGILDKYNVKVIGTSIESIKEGEDRELFRDMMNRINQPVIQSEIITDLDAGIAFARKIGYPVIVRPAYTLGGTGGGIANNEEELIETLTSGLQLSTIGQVLLEKSVKGWKEIEYEVMRDSFGNCITVCNMENIDPVGIHTGDSIVVAPSQTLSDKEYQMLRSASIDIINAVGIEGGCNVQFALNPHSFEYAVIEINPRVSRSSALASKATGYPIAKVAAKIALGYGLDEIKNAVTGMTYACFEPSLDYVVVKIPKWPFDKFQGADRVLGTKMMATGEIMAIGSNFEAAFLKGIRSLEIGKYSLEHKKFKDLSMYELRERVVSPDDERIFALAEMLRRGYRIDMVSKITGIDIFFLEKFRWLVEEEQKLKQSTIDDLNREWLLKLKRRGFSDKAIADMLKVSPDEIYRLRDIWHIKPSYKMVDTCGGEFEALSPYYYSTYEQYDEVVVSDNKKVVVIGSGPIRIGQGIEFDYASVHCVMALRKQGIETIVINNNPETVSTDFSISDKLYFEPLTEEDVLNIIDKEKPDGVILQFGGQTAIKLAKFLKEKNIPTLGTTSDQIDLAEDREQFDDLLERLNIARPKGKGVWSLEEGLEEARRLGFPILVRPSFVLGGQGMEITHDEEELTYYLTNAFEKDSKNPILIDKYLMGREIEVDAISDGEDVLVPGIMEHLERAGVHSGDSITMYPAQNISDKIKEDVLDYTKKLALSIGIKGMINIQFIEFEGKLYVIEVNPRASRTVPYISKVSGVPIVDIATRIMLGEKLKDLGYGTGVYKEPELVSVKVPVFSTQKLPNVEVSLGPEMRSTGEVLGVGRNVFEALYKGFVGASMYTGDKGKTILATIKKHDKKEFMELAKDLDKLGYNFIATTGTAKELREAGIDAKEVRRIGEESPNIMDLIKNKEIDLVVNTPTKANDSKRDGFHIRRAAIERNIGVMTSLDTLKALVELQKEGAHNRELEVFNLI.

Residues 1–401 are carboxyphosphate synthetic domain; it reads MPLNKDIKKV…AFLKGIRSLE (401 aa). 12 residues coordinate ATP: arginine 129, arginine 169, glycine 175, glycine 176, lysine 208, valine 210, glutamate 215, glycine 241, isoleucine 242, histidine 243, glutamine 284, and glutamate 298. The ATP-grasp 1 domain occupies 133-327; sequence RDMMNRINQP…IAKVAAKIAL (195 aa). The Mg(2+) site is built by glutamine 284, glutamate 298, and asparagine 300. The Mn(2+) site is built by glutamine 284, glutamate 298, and asparagine 300. An oligomerization domain region spans residues 402 to 549; the sequence is IGKYSLEHKK…YSTYEQYDEV (148 aa). The carbamoyl phosphate synthetic domain stretch occupies residues 550–932; that stretch reads VVSDNKKVVV…ALYKGFVGAS (383 aa). In terms of domain architecture, ATP-grasp 2 spans 674–864; that stretch reads DDLLERLNIA…IVDIATRIML (191 aa). The ATP site is built by arginine 710, lysine 749, leucine 751, glutamate 755, glycine 780, valine 781, histidine 782, serine 783, glutamine 823, and glutamate 835. Positions 823, 835, and 837 each coordinate Mg(2+). Mn(2+) contacts are provided by glutamine 823, glutamate 835, and asparagine 837. An MGS-like domain is found at 933–1067; sequence MYTGDKGKTI…NRELEVFNLI (135 aa). The allosteric domain stretch occupies residues 933-1067; it reads MYTGDKGKTI…NRELEVFNLI (135 aa).

It belongs to the CarB family. Composed of two chains; the small (or glutamine) chain promotes the hydrolysis of glutamine to ammonia, which is used by the large (or ammonia) chain to synthesize carbamoyl phosphate. Tetramer of heterodimers (alpha,beta)4. Requires Mg(2+) as cofactor. Mn(2+) is required as a cofactor.

The enzyme catalyses hydrogencarbonate + L-glutamine + 2 ATP + H2O = carbamoyl phosphate + L-glutamate + 2 ADP + phosphate + 2 H(+). It catalyses the reaction hydrogencarbonate + NH4(+) + 2 ATP = carbamoyl phosphate + 2 ADP + phosphate + 2 H(+). Its pathway is amino-acid biosynthesis; L-arginine biosynthesis; carbamoyl phosphate from bicarbonate: step 1/1. The protein operates within pyrimidine metabolism; UMP biosynthesis via de novo pathway; (S)-dihydroorotate from bicarbonate: step 1/3. Its function is as follows. Large subunit of the glutamine-dependent carbamoyl phosphate synthetase (CPSase). CPSase catalyzes the formation of carbamoyl phosphate from the ammonia moiety of glutamine, carbonate, and phosphate donated by ATP, constituting the first step of 2 biosynthetic pathways, one leading to arginine and/or urea and the other to pyrimidine nucleotides. The large subunit (synthetase) binds the substrates ammonia (free or transferred from glutamine from the small subunit), hydrogencarbonate and ATP and carries out an ATP-coupled ligase reaction, activating hydrogencarbonate by forming carboxy phosphate which reacts with ammonia to form carbamoyl phosphate. This is Carbamoyl phosphate synthase large chain from Clostridium perfringens (strain 13 / Type A).